The chain runs to 117 residues: Large ribosomal subunit protein bL20 (117 aa).

The protein belongs to the bacterial ribosomal protein bL20 family.

Functionally, binds directly to 23S ribosomal RNA and is necessary for the in vitro assembly process of the 50S ribosomal subunit. It is not involved in the protein synthesizing functions of that subunit. The chain is Large ribosomal subunit protein bL20 from Carboxydothermus hydrogenoformans (strain ATCC BAA-161 / DSM 6008 / Z-2901).